The following is a 231-amino-acid chain: Large ribosomal subunit protein uL3 (231 aa).

The residue at position 151 (glutamine 151) is an N5-methylglutamine.

The protein belongs to the universal ribosomal protein uL3 family. As to quaternary structure, part of the 50S ribosomal subunit. Forms a cluster with proteins L14 and L19. In terms of processing, methylated by PrmB.

Functionally, one of the primary rRNA binding proteins, it binds directly near the 3'-end of the 23S rRNA, where it nucleates assembly of the 50S subunit. In Ehrlichia canis (strain Jake), this protein is Large ribosomal subunit protein uL3.